A 1403-amino-acid polypeptide reads, in one-letter code: DNA-directed RNA polymerase subunit beta' (1403 aa).

Positions 70, 72, 85, and 88 each coordinate Zn(2+). D461, D463, and D465 together coordinate Mg(2+). Positions 687 to 708 (QQISQEETTGDRDGKRETRKQP) are disordered. A compositionally biased stretch (basic and acidic residues) spans 695–706 (TGDRDGKRETRK). 4 residues coordinate Zn(2+): C805, C879, C886, and C889. The tract at residues 1381–1403 (THGDTGPLGEPSRPVGTQTTGAA) is disordered.

This sequence belongs to the RNA polymerase beta' chain family. As to quaternary structure, the RNAP catalytic core consists of 2 alpha, 1 beta, 1 beta' and 1 omega subunit. When a sigma factor is associated with the core the holoenzyme is formed, which can initiate transcription. Requires Mg(2+) as cofactor. The cofactor is Zn(2+).

It carries out the reaction RNA(n) + a ribonucleoside 5'-triphosphate = RNA(n+1) + diphosphate. Functionally, DNA-dependent RNA polymerase catalyzes the transcription of DNA into RNA using the four ribonucleoside triphosphates as substrates. The sequence is that of DNA-directed RNA polymerase subunit beta' from Myxococcus xanthus (strain DK1622).